The following is a 511-amino-acid chain: Exodeoxyribonuclease 7 large subunit (511 aa).

This sequence belongs to the XseA family. In terms of assembly, heterooligomer composed of large and small subunits.

It is found in the cytoplasm. The enzyme catalyses Exonucleolytic cleavage in either 5'- to 3'- or 3'- to 5'-direction to yield nucleoside 5'-phosphates.. Its function is as follows. Bidirectionally degrades single-stranded DNA into large acid-insoluble oligonucleotides, which are then degraded further into small acid-soluble oligonucleotides. The chain is Exodeoxyribonuclease 7 large subunit from Brucella melitensis biotype 2 (strain ATCC 23457).